A 287-amino-acid polypeptide reads, in one-letter code: ATP synthase gamma chain (287 aa).

This sequence belongs to the ATPase gamma chain family. F-type ATPases have 2 components, CF(1) - the catalytic core - and CF(0) - the membrane proton channel. CF(1) has five subunits: alpha(3), beta(3), gamma(1), delta(1), epsilon(1). CF(0) has three main subunits: a, b and c.

The protein resides in the cell inner membrane. Its function is as follows. Produces ATP from ADP in the presence of a proton gradient across the membrane. The gamma chain is believed to be important in regulating ATPase activity and the flow of protons through the CF(0) complex. In Tolumonas auensis (strain DSM 9187 / NBRC 110442 / TA 4), this protein is ATP synthase gamma chain.